The sequence spans 212 residues: Thiamine-phosphate synthase (212 aa).

4-amino-2-methyl-5-(diphosphooxymethyl)pyrimidine-binding positions include 35-39 (QLRRK) and N67. Positions 68 and 87 each coordinate Mg(2+). S106 is a 4-amino-2-methyl-5-(diphosphooxymethyl)pyrimidine binding site. 132 to 134 (TGS) is a 2-[(2R,5Z)-2-carboxy-4-methylthiazol-5(2H)-ylidene]ethyl phosphate binding site. Residue K135 participates in 4-amino-2-methyl-5-(diphosphooxymethyl)pyrimidine binding. 2-[(2R,5Z)-2-carboxy-4-methylthiazol-5(2H)-ylidene]ethyl phosphate-binding positions include G163 and 183 to 184 (IS).

It belongs to the thiamine-phosphate synthase family. The cofactor is Mg(2+).

It carries out the reaction 2-[(2R,5Z)-2-carboxy-4-methylthiazol-5(2H)-ylidene]ethyl phosphate + 4-amino-2-methyl-5-(diphosphooxymethyl)pyrimidine + 2 H(+) = thiamine phosphate + CO2 + diphosphate. The enzyme catalyses 2-(2-carboxy-4-methylthiazol-5-yl)ethyl phosphate + 4-amino-2-methyl-5-(diphosphooxymethyl)pyrimidine + 2 H(+) = thiamine phosphate + CO2 + diphosphate. It catalyses the reaction 4-methyl-5-(2-phosphooxyethyl)-thiazole + 4-amino-2-methyl-5-(diphosphooxymethyl)pyrimidine + H(+) = thiamine phosphate + diphosphate. Its pathway is cofactor biosynthesis; thiamine diphosphate biosynthesis; thiamine phosphate from 4-amino-2-methyl-5-diphosphomethylpyrimidine and 4-methyl-5-(2-phosphoethyl)-thiazole: step 1/1. Its function is as follows. Condenses 4-methyl-5-(beta-hydroxyethyl)thiazole monophosphate (THZ-P) and 2-methyl-4-amino-5-hydroxymethyl pyrimidine pyrophosphate (HMP-PP) to form thiamine monophosphate (TMP). The protein is Thiamine-phosphate synthase of Chlorobium luteolum (strain DSM 273 / BCRC 81028 / 2530) (Pelodictyon luteolum).